We begin with the raw amino-acid sequence, 365 residues long: MNILKISKQTLRNNIKIIREYIGNAKMCFPVKANAYGHGIEDIVENTHDLVDFFAVANSLEAFRVTAVAKNPVLVFGVIYYEYIEKMISENIRVSIQDYEYIEKLEQIAKELDKKVYAHININTGMNRMGVDYNDACRTIQRAYESDWLILEGVYSHLACADNRDHPTNIKQKNRFDSIVKFTKGLSQDIICHLSNSYGFLGQKGICYDMVRPGILSYGFLPEFYVDRVIREIKPIARLLSKVVKIITLQEGEGVGYSLIYRGFEGEQLAVIPIGYGDGFPRELGDRGFVNINDVMYPMAGRMSMDGLTVSLGINEYDVKVGDTVELISAIPRNRNSAFSIAKQINTIEYDIMSTLNDRIIRKII.

Lys-32 (proton acceptor; specific for D-alanine) is an active-site residue. The residue at position 32 (Lys-32) is an N6-(pyridoxal phosphate)lysine. A substrate-binding site is contributed by Arg-128. Residue Tyr-257 is the Proton acceptor; specific for L-alanine of the active site. Met-305 serves as a coordination point for substrate.

This sequence belongs to the alanine racemase family. Requires pyridoxal 5'-phosphate as cofactor.

The enzyme catalyses L-alanine = D-alanine. Its pathway is amino-acid biosynthesis; D-alanine biosynthesis; D-alanine from L-alanine: step 1/1. Functionally, catalyzes the interconversion of L-alanine and D-alanine. May also act on other amino acids. In Francisella tularensis subsp. holarctica (strain OSU18), this protein is Alanine racemase (alr).